Here is a 581-residue protein sequence, read N- to C-terminus: Sodium/hydrogen exchanger 8 (581 aa).

A run of 11 helical transmembrane segments spans residues 60-80 (MTIFFSLLVLAICIILVHLLI), 84-104 (LHFLPESVAVVSLGILMGAVI), 123-143 (PNMFFLLLLPPIIFESGYSLH), 156-176 (LFAVFGTAISAFVVGGGIYFL), 191-211 (FAFGSLISAVDPVATIAIFNA), 264-284 (FLKMFFGSAALGTLTGLISAL), 311-331 (GLAEGISLSGIMAILFSGIVM), 354-374 (VAFLCETCVFAFLGLSIFSFP), 379-399 (ISFVIWCIVLVLFGRAVNIFP), 417-437 (MFIMWFSGLRGAIPYALSLHL), and 451-471 (TTIVIVLFTILLLGGSTMPLI). At Thr510 the chain carries Phosphothreonine. Phosphoserine occurs at positions 571 and 573.

The protein belongs to the monovalent cation:proton antiporter 1 (CPA1) transporter (TC 2.A.36) family. Ubiquitous. Strongly expressed in skeletal muscle and kidney. Detected throughout the entire gastrointestinal tract, with high expression detected in stomach, duodenum and ascending colon.

Its subcellular location is the golgi apparatus membrane. The protein resides in the golgi apparatus. The protein localises to the trans-Golgi network membrane. It localises to the endosome. It is found in the multivesicular body membrane. Its subcellular location is the apical cell membrane. The protein resides in the cytoplasmic vesicle. The protein localises to the secretory vesicle. It localises to the acrosome. It carries out the reaction Na(+)(in) + H(+)(out) = Na(+)(out) + H(+)(in). HOE642 inhibits SLC9A8 activity. Functionally, na(+)/H(+) antiporter. Mediates the electoneutral exchange of intracellular H(+) ions for extracellular Na(+) in 1:1 stoichiometry. Acts as an Na(+)/H(+) exchanger in the trans-Golgi. Contributes to the regulation of pH regulation of Golgi apparatus, and consequently, in protein trafficking and endosomal morphology. In germ cells, plays a crucial role in acrosome biogenesis and sperm development, probably by playing a role in the fusion of the Golgi-derived vesicles that form the acrosomal cap. Can also be active at the cell surface of specialized cells. In the small intestine, at the cell membrane, plays a major physiological role in transepithelial absorption of Na(+) and regulates intracellular pH homeostasis of intestinal epithelial cells. Acts as an important regulator of mucosal integrity in the intestine and in the stomach, could mediate the pH fluctuation necessary for mucin exocytosis or assist membrane trafficking of other proteins. Plays a role in photoreceptor survival and in the maintenance of intracellular pH homeostasis in retinal pigment epithelium (RPE cells). The polypeptide is Sodium/hydrogen exchanger 8 (Homo sapiens (Human)).